The primary structure comprises 264 residues: Nuclear egress protein 1 (264 aa).

Over residues 1 to 12 (MTVHKNRFRRSR) the composition is skewed to basic residues. Residues 1-22 (MTVHKNRFRRSRSLSVTHRIQK) form a disordered region. Residues 83–187 (CLEFSPYANE…HIVFQSRTLH (105 aa)) form a CCCH-type zinc finger.

This sequence belongs to the herpesviridae NEC1 protein family. Forms a heterohexameric complex with NEC2. Interacts with capsid vertex specific component 2/CVC2; this interaction directs the capsid to the host inner nuclear membrane to initiate budding. Post-translationally, phosphorylated at serine residues in the N-terminus. This phosphorylation regulates the localization within the inner nuclear membrane.

It is found in the host nucleus inner membrane. Its function is as follows. Plays an essential role in virion nuclear egress, the first step of virion release from infected cell. Within the host nucleus, NEC1 interacts with the newly formed capsid through the vertexes and directs it to the inner nuclear membrane by associating with NEC2. Induces the budding of the capsid at the inner nuclear membrane as well as its envelopment into the perinuclear space. There, the NEC1/NEC2 complex promotes the fusion of the enveloped capsid with the outer nuclear membrane and the subsequent release of the viral capsid into the cytoplasm where it will reach the secondary budding sites in the host Golgi or trans-Golgi network. The chain is Nuclear egress protein 1 from Human herpesvirus 6B (HHV-6 variant B).